The following is a 267-amino-acid chain: 4-hydroxy-tetrahydrodipicolinate reductase (267 aa).

NAD(+) contacts are provided by residues 12-17 (GPRGRM), 100-102 (GTT), and 126-129 (APNF). Histidine 156 serves as the catalytic Proton donor/acceptor. A (S)-2,3,4,5-tetrahydrodipicolinate-binding site is contributed by histidine 157. Catalysis depends on lysine 160, which acts as the Proton donor. Position 166–167 (166–167 (GT)) interacts with (S)-2,3,4,5-tetrahydrodipicolinate.

Belongs to the DapB family.

The protein localises to the cytoplasm. It carries out the reaction (S)-2,3,4,5-tetrahydrodipicolinate + NAD(+) + H2O = (2S,4S)-4-hydroxy-2,3,4,5-tetrahydrodipicolinate + NADH + H(+). The enzyme catalyses (S)-2,3,4,5-tetrahydrodipicolinate + NADP(+) + H2O = (2S,4S)-4-hydroxy-2,3,4,5-tetrahydrodipicolinate + NADPH + H(+). It participates in amino-acid biosynthesis; L-lysine biosynthesis via DAP pathway; (S)-tetrahydrodipicolinate from L-aspartate: step 4/4. In terms of biological role, catalyzes the conversion of 4-hydroxy-tetrahydrodipicolinate (HTPA) to tetrahydrodipicolinate. The polypeptide is 4-hydroxy-tetrahydrodipicolinate reductase (Bacillus velezensis (strain DSM 23117 / BGSC 10A6 / LMG 26770 / FZB42) (Bacillus amyloliquefaciens subsp. plantarum)).